A 159-amino-acid polypeptide reads, in one-letter code: SsrA-binding protein (159 aa).

The protein belongs to the SmpB family.

It localises to the cytoplasm. Its function is as follows. Required for rescue of stalled ribosomes mediated by trans-translation. Binds to transfer-messenger RNA (tmRNA), required for stable association of tmRNA with ribosomes. tmRNA and SmpB together mimic tRNA shape, replacing the anticodon stem-loop with SmpB. tmRNA is encoded by the ssrA gene; the 2 termini fold to resemble tRNA(Ala) and it encodes a 'tag peptide', a short internal open reading frame. During trans-translation Ala-aminoacylated tmRNA acts like a tRNA, entering the A-site of stalled ribosomes, displacing the stalled mRNA. The ribosome then switches to translate the ORF on the tmRNA; the nascent peptide is terminated with the 'tag peptide' encoded by the tmRNA and targeted for degradation. The ribosome is freed to recommence translation, which seems to be the essential function of trans-translation. This Dichelobacter nodosus (strain VCS1703A) protein is SsrA-binding protein.